The sequence spans 212 residues: Peptide methionine sulfoxide reductase MsrA (212 aa).

Residue Cys-52 is part of the active site.

This sequence belongs to the MsrA Met sulfoxide reductase family.

It catalyses the reaction L-methionyl-[protein] + [thioredoxin]-disulfide + H2O = L-methionyl-(S)-S-oxide-[protein] + [thioredoxin]-dithiol. The enzyme catalyses [thioredoxin]-disulfide + L-methionine + H2O = L-methionine (S)-S-oxide + [thioredoxin]-dithiol. In terms of biological role, has an important function as a repair enzyme for proteins that have been inactivated by oxidation. Catalyzes the reversible oxidation-reduction of methionine sulfoxide in proteins to methionine. The polypeptide is Peptide methionine sulfoxide reductase MsrA (Escherichia coli (strain ATCC 8739 / DSM 1576 / NBRC 3972 / NCIMB 8545 / WDCM 00012 / Crooks)).